The primary structure comprises 446 residues: MAGAEVEEEAGIPKKIESTEEVLIKCQCWVRKDEEERLAEILSINARVSPSKFYVHYVNFNKRLDEWVTGDRINLDKEVIFPRPKRQLEEDTNKKQKKKKKFPQKAAVVESDAKSSEMGEGSDVMDLDNLNVRGLKDEEISREDEIKKLRTSGSMIQNPHEVAHVRNLSKIIMGKFEIEPWYFSPYPIELTDLDVVYIDDFTLQYFGSRKQYERYRKKCTLRHPPGNEIYRDDYVSFFEIDGRKQRTWCRNLCLLSKLFLDHKTLYYDVDPFLFYCMTRRDEMGHHFVGYFSKEKESADGYNVACILTLPQYQRMGYGRLLIEFSYELSKKEGKVGSPEKPLSDLGLLSYRAYWSDVLITLLVEHGKEVTIDEISSMTSMTTTDILHTLKTLNILRYYKGQHIIFLNDDILERYNQLKTKKRRHIDAEKLLWKPPVFTASQLRFAW.

A Tudor-knot domain is found at 24–75 (IKCQCWVRKDEEERLAEILSINARVSPSKFYVHYVNFNKRLDEWVTGDRINL). A disordered region spans residues 86-121 (RQLEEDTNKKQKKKKKFPQKAAVVESDAKSSEMGEG). Residues 163 to 434 (AHVRNLSKII…IDAEKLLWKP (272 aa)) enclose the MYST-type HAT domain. The segment at 196–221 (VYIDDFTLQYFGSRKQYERYRKKCTL) adopts a C2HC MYST-type; degenerate zinc-finger fold. The ESA1-RPD3 motif motif lies at 246 to 267 (RTWCRNLCLLSKLFLDHKTLYY). Lys263 carries the post-translational modification N6-acetyllysine; by autocatalysis. Residues 304-308 (ACILT) and 313-319 (QRMGYGR) contribute to the acetyl-CoA site. The active-site Proton donor/acceptor is the Glu339. Residue Ser343 participates in acetyl-CoA binding.

The protein belongs to the MYST (SAS/MOZ) family. As to quaternary structure, component of the NuA4 histone acetyltransferase complex. In terms of processing, autoacetylation at Lys-263 is required for proper function.

The protein resides in the nucleus. Its subcellular location is the chromosome. It catalyses the reaction L-lysyl-[histone] + acetyl-CoA = N(6)-acetyl-L-lysyl-[histone] + CoA + H(+). The enzyme catalyses L-lysyl-[protein] + acetyl-CoA = N(6)-acetyl-L-lysyl-[protein] + CoA + H(+). It carries out the reaction 2-hydroxyisobutanoyl-CoA + L-lysyl-[protein] = N(6)-(2-hydroxyisobutanoyl)-L-lysyl-[protein] + CoA + H(+). The catalysed reaction is (2E)-butenoyl-CoA + L-lysyl-[protein] = N(6)-(2E)-butenoyl-L-lysyl-[protein] + CoA + H(+). Functionally, catalytic component of the NuA4 histone acetyltransferase (HAT) complex which is involved in epigenetic transcriptional activation of selected genes principally by acetylation of nucleosomal histones H4, H3, H2B, H2A and H2A variant H2A.Z. Acetylates histone H4 to form H4K5ac, H4K8ac, H4K12ac and H4K16ac, histone H3 to form H3K14ac, and histone H2A to form H2AK4ac and H2AK7ac. The NuA4 complex is involved in the DNA damage response and is required for chromosome segregation. The NuA4 complex plays a direct role in repair of DNA double-strand breaks (DSBs) through homologous recombination. Recruitment to promoters depends on H3K4me. Also acetylates non-histone proteins. In addition to protein acetyltransferase, can use different acyl-CoA substrates, such as 2-hydroxyisobutanoyl-CoA (2-hydroxyisobutyryl-CoA) or (2E)-butenoyl-CoA (crotonyl-CoA), and is able to mediate protein 2-hydroxyisobutyrylation and crotonylation, respectively. The polypeptide is Histone acetyltransferase ESA1 (ESA1) (Candida glabrata (strain ATCC 2001 / BCRC 20586 / JCM 3761 / NBRC 0622 / NRRL Y-65 / CBS 138) (Yeast)).